Here is a 319-residue protein sequence, read N- to C-terminus: 1-aminocyclopropane-1-carboxylate oxidase 4 (319 aa).

One can recognise a Fe2OG dioxygenase domain in the interval 153–253; the sequence is PNFGTKVSNY…RMSLASFYNP (101 aa). Positions 177, 179, and 234 each coordinate Fe cation.

The protein belongs to the iron/ascorbate-dependent oxidoreductase family. Fe cation is required as a cofactor.

It catalyses the reaction 1-aminocyclopropane-1-carboxylate + L-ascorbate + O2 = ethene + L-dehydroascorbate + hydrogen cyanide + CO2 + 2 H2O. It participates in alkene biosynthesis; ethylene biosynthesis via S-adenosyl-L-methionine; ethylene from S-adenosyl-L-methionine: step 2/2. The sequence is that of 1-aminocyclopropane-1-carboxylate oxidase 4 (ACO4) from Petunia hybrida (Petunia).